The following is a 181-amino-acid chain: RNA pyrophosphohydrolase (181 aa).

In terms of domain architecture, Nudix hydrolase spans 6-148 (GFRPNVGIIV…KRQVYRQALQ (143 aa)). Positions 38-59 (GGVEANETPLEALYRELREEVG) match the Nudix box motif.

Belongs to the Nudix hydrolase family. RppH subfamily. A divalent metal cation is required as a cofactor.

Functionally, accelerates the degradation of transcripts by removing pyrophosphate from the 5'-end of triphosphorylated RNA, leading to a more labile monophosphorylated state that can stimulate subsequent ribonuclease cleavage. In Halorhodospira halophila (strain DSM 244 / SL1) (Ectothiorhodospira halophila (strain DSM 244 / SL1)), this protein is RNA pyrophosphohydrolase.